The primary structure comprises 892 residues: Protein translocase subunit SecA (892 aa).

Residues Gln-89, 107-111 (GEGKT), and Asp-517 contribute to the ATP site. Positions 879, 881, 890, and 891 each coordinate Zn(2+).

It belongs to the SecA family. As to quaternary structure, monomer and homodimer. Part of the essential Sec protein translocation apparatus which comprises SecA, SecYEG and auxiliary proteins SecDF-YajC and YidC. Requires Zn(2+) as cofactor.

The protein resides in the cell inner membrane. It is found in the cytoplasm. It catalyses the reaction ATP + H2O + cellular proteinSide 1 = ADP + phosphate + cellular proteinSide 2.. Part of the Sec protein translocase complex. Interacts with the SecYEG preprotein conducting channel. Has a central role in coupling the hydrolysis of ATP to the transfer of proteins into and across the cell membrane, serving as an ATP-driven molecular motor driving the stepwise translocation of polypeptide chains across the membrane. The protein is Protein translocase subunit SecA of Ruthia magnifica subsp. Calyptogena magnifica.